Consider the following 459-residue polypeptide: Argininosuccinate lyase (459 aa).

Belongs to the lyase 1 family. Argininosuccinate lyase subfamily.

The protein resides in the cytoplasm. The catalysed reaction is 2-(N(omega)-L-arginino)succinate = fumarate + L-arginine. It functions in the pathway amino-acid biosynthesis; L-arginine biosynthesis; L-arginine from L-ornithine and carbamoyl phosphate: step 3/3. The sequence is that of Argininosuccinate lyase from Bacillus licheniformis (strain ATCC 14580 / DSM 13 / JCM 2505 / CCUG 7422 / NBRC 12200 / NCIMB 9375 / NCTC 10341 / NRRL NRS-1264 / Gibson 46).